The sequence spans 110 residues: Cytochrome c oxidase subunit 4B (110 aa).

The next 3 membrane-spanning stretches (helical) occupy residues 27 to 47, 50 to 70, and 88 to 108; these read YQVL…LTVA, GVGS…QVIF, and LFLY…VTII.

It belongs to the cytochrome c oxidase bacterial subunit 4 family.

The protein resides in the cell membrane. The catalysed reaction is 4 Fe(II)-[cytochrome c] + O2 + 8 H(+)(in) = 4 Fe(III)-[cytochrome c] + 2 H2O + 4 H(+)(out). The chain is Cytochrome c oxidase subunit 4B (ctaF) from Bacillus subtilis (strain 168).